Consider the following 454-residue polypeptide: GTPase Der (454 aa).

EngA-type G domains are found at residues 4–167 (AIVA…SEDK) and 188–363 (LELA…ASWQ). Residues 10 to 17 (GKPNVGKS), 56 to 60 (DTPGL), 121 to 124 (NKTE), 194 to 201 (GRPNCGKS), 241 to 245 (DTAGV), and 306 to 309 (NKWD) each bind GTP. One can recognise a KH-like domain in the interval 364 to 450 (KRVTTGTLNQ…PVRLSFVKGK (87 aa)).

The protein belongs to the TRAFAC class TrmE-Era-EngA-EngB-Septin-like GTPase superfamily. EngA (Der) GTPase family. Associates with the 50S ribosomal subunit.

Its function is as follows. GTPase that plays an essential role in the late steps of ribosome biogenesis. This chain is GTPase Der, found in Orientia tsutsugamushi (strain Ikeda) (Rickettsia tsutsugamushi).